Consider the following 301-residue polypeptide: Probable alpha-L-glutamate ligase (301 aa).

The ATP-grasp domain maps to 104-287 (LQLLSRKGIG…VAGMIVEFIE (184 aa)). ATP contacts are provided by residues Lys-141, 178-179 (EF), Asp-187, and 211-213 (RSN). Mg(2+)-binding residues include Asp-248, Glu-260, and Asn-262. Residues Asp-248, Glu-260, and Asn-262 each coordinate Mn(2+).

The protein belongs to the RimK family. Requires Mg(2+) as cofactor. It depends on Mn(2+) as a cofactor.

This is Probable alpha-L-glutamate ligase from Teredinibacter turnerae (strain ATCC 39867 / T7901).